The sequence spans 248 residues: Probable capsular polysaccharide biosynthesis protein YwqC (248 aa).

Helical transmembrane passes span 18–38 (ILLI…ISFF) and 174–194 (LLNI…LAFL).

This sequence belongs to the CpsC/CapA family. Not phosphorylated in vitro by YwqD.

It is found in the cell membrane. Its pathway is capsule biogenesis; capsule polysaccharide biosynthesis. In terms of biological role, required for YwqD kinase activity. May bring YwqD and its substrates into contact. Probably involved in the regulation of capsular polysaccharide biosynthesis. This is Probable capsular polysaccharide biosynthesis protein YwqC (ywqC) from Bacillus subtilis (strain 168).